Here is a 620-residue protein sequence, read N- to C-terminus: KIF-binding protein (620 aa).

Coiled-coil stretches lie at residues 30–64 and 133–169; these read YKSKYEAIELLVKELKKEINENEKELNQQQQQDIL and LIKSENLINQTIEKQQEQEQEQEQQFKDKLESLQLQN.

It belongs to the KIF-binding protein family.

Its subcellular location is the cytoplasm. The protein localises to the cytoskeleton. Its function is as follows. Activator of KIF1B plus-end-directed microtubule motor activity. Required for organization of axonal microtubules, and axonal outgrowth and maintenance during peripheral and central nervous system development. The sequence is that of KIF-binding protein (kifbp) from Dictyostelium discoideum (Social amoeba).